The following is a 132-amino-acid chain: Lectin OAA (132 aa).

2 tandem repeats follow at residues 1–66 (ALYN…TLLG) and 67–132 (NNSY…GTTL). A 2 X approximate tandem repeats region spans residues 1 to 132 (ALYNVENQWG…GPIGFKGTTL (132 aa)).

In terms of assembly, monomer.

Lectin specific for high mannose N-glycans, recognizes the branched moiety of these glycans. Does not recognize other types of N-glycans or monosaccharides. Agglutinates trypsin-treated rabbit erythrocytes. Does not require divalent cations for activity. Inhibits HIV replication in MT4 cells with an EC(50) of 45 nM. Binds to the HIV envelope glycoprotein gp120. The polypeptide is Lectin OAA (Planktothrix agardhii (Oscillatoria agardhii)).